The sequence spans 348 residues: Terpene cyclase ctvD (348 aa).

Residues 2-22 (ALSAYFLLCLSVLGLDAIYGF) traverse the membrane as a helical segment. N-linked (GlcNAc...) asparagine glycosylation occurs at Asn51. Helical transmembrane passes span 77-97 (PGLS…WVAI), 116-136 (LFAM…WCAI), 161-181 (LIPI…LLPE), 191-211 (QIAI…HWGL), 235-255 (FAFV…LTLI), 283-303 (GLWF…LWAM), and 323-343 (LKVG…WLLW).

This sequence belongs to the membrane-bound ascI terpene cyclase family.

It is found in the membrane. The protein operates within mycotoxin biosynthesis. Functionally, hydrolase; part of the gene cluster that mediates the biosynthesis of citreoviridin, an inhibitor of the of F1-ATPase beta-subunit. The HR-PKS ctvA accepts acetyl-CoA as the starter unit and catalyzes eight iterations of malonyl-CoA extension and four iterations of SAM-dependent methylation at C4, C12, C14, and C16. The KR and DH domains selectively act on the first six iterations to generate the hexaene chain. In the last three iterations, the KR and DH domains terminate their functions to yield a beta,delta-diketo ester moiety, which then undergoes intramolecular cyclization to yield an alpha-pyrone intermediate. Subsequently, ctvB methylates the alpha-pyrone hydroxyl group to generate citreomontanin. In order to form the tetrahydrofuran ring with the correct stereochemistry, the terminal alkenes of citreomontanin need to undergo isomerization to yield a (17Z)-hexaene, a step that could be catalyzed by ctvC. The (17Z)-hexaene then undergoes bisepoxidation by ctvC to form a (17R,16R,15S,14R)-bisepoxide moiety. Lastly, ctvD acts as a regioselective hydrolase to form the tetrahydrofuran ring with the substituents in the correct absolute configuration, completing the biosynthesis of citreoviridin. The polypeptide is Terpene cyclase ctvD (Aspergillus terreus (strain NIH 2624 / FGSC A1156)).